Consider the following 164-residue polypeptide: Protein SprT (164 aa).

A SprT-like domain is found at 12-157 (CFLQAESFFK…CRRCRQTLVF (146 aa)). Position 69 (H69) interacts with Zn(2+). Residue E70 is part of the active site. H73 serves as a coordination point for Zn(2+).

This sequence belongs to the SprT family. Zn(2+) serves as cofactor.

It localises to the cytoplasm. This chain is Protein SprT, found in Pseudomonas fluorescens (strain SBW25).